The sequence spans 441 residues: Cysteine proteinase (441 aa).

Cys-249 and Cys-290 form a disulfide bridge. Cys-252 is a catalytic residue. Asn-270 and Asn-345 each carry an N-linked (GlcNAc...) asparagine glycan. Active-site residues include His-381 and Asn-403.

Belongs to the peptidase C1 family.

The polypeptide is Cysteine proteinase (TACP) (Theileria annulata).